Here is a 1084-residue protein sequence, read N- to C-terminus: Probable hemoglobin and hemoglobin-haptoglobin-binding protein 3 (1084 aa).

Positions 1–24 (MTNFKFSLLACSIAFALNASTVYA) are cleaved as a signal peptide. 12 consecutive repeat copies span residues 26–29 (QPTN), 30–33 (QPTN), 34–37 (QPTN), 38–41 (QPTN), 42–45 (QPTN), 46–49 (QPTN), 50–53 (QPTN), 54–57 (QPTN), 58–61 (QPTN), 62–65 (QPTN), 66–69 (QPTN), and 70–73 (QPTN). The 12 X 4 AA tandem repeats of Q-P-T-N stretch occupies residues 26 to 73 (QPTNQPTNQPTNQPTNQPTNQPTNQPTNQPTNQPTNQPTNQPTNQPTN). Positions 26 to 75 (QPTNQPTNQPTNQPTNQPTNQPTNQPTNQPTNQPTNQPTNQPTNQPTNQN) are enriched in low complexity. A disordered region spans residues 26–77 (QPTNQPTNQPTNQPTNQPTNQPTNQPTNQPTNQPTNQPTNQPTNQPTNQNSN). The short motif at 83–90 (EQINVSGS) is the TonB box element. The TBDR plug domain occupies 95 to 220 (NIKEKKVGET…LGGSVIFETK (126 aa)). The TBDR beta-barrel domain maps to 228-1084 (DKDYYLSYKR…NYRMSVQFEF (857 aa)). The TonB C-terminal box signature appears at 1067–1084 (NRFYAPGRNYRMSVQFEF).

The protein belongs to the TonB-dependent receptor family. Hemoglobin/haptoglobin binding protein subfamily.

The protein resides in the cell outer membrane. Functionally, acts as a receptor for hemoglobin or the hemoglobin/haptoglobin complex of the human host and is required for heme uptake. The polypeptide is Probable hemoglobin and hemoglobin-haptoglobin-binding protein 3 (Haemophilus influenzae (strain ATCC 51907 / DSM 11121 / KW20 / Rd)).